The primary structure comprises 320 residues: uncharacterized protein (320 aa).

The next 7 membrane-spanning stretches (helical) occupy residues 24-44 (FEFSVHGTCVVFNLFLCIFFI), 65-85 (FVLSLPLFFLQFYLVVFLWSL), 105-125 (TTSCAQVLPLAVAIYRYFIVV), 132-152 (SWFVVVVHSIISFIFFVIAIL), 179-199 (ISLTLGLNLFAVFINVAIYTF), 226-246 (MIPILVSIPLLVGSFDFYFGY), and 253-275 (TSRWYATTFLSPLLTPISSMLSL).

It is found in the membrane. This is an uncharacterized protein from Caenorhabditis elegans.